A 274-amino-acid polypeptide reads, in one-letter code: Momilactone A synthase (274 aa).

This sequence belongs to the short-chain dehydrogenases/reductases (SDR) family.

It carries out the reaction 3beta-hydroxy-9beta-pimara-7,15-dien-19,6beta-olide + NAD(+) = momilactone A + NADH + H(+). The catalysed reaction is 3beta-hydroxy-9beta-pimara-7,15-dien-19,6beta-olide + NADP(+) = momilactone A + NADPH + H(+). Its function is as follows. Involved in momilactone phytoalexins biosynthesis. Catalyzes the last step of momilactone A biosynthesis. This is Momilactone A synthase from Oryza sativa subsp. japonica (Rice).